An 88-amino-acid chain; its full sequence is Putative septation protein SpoVG (88 aa).

It belongs to the SpoVG family.

Functionally, could be involved in septation. This Lachnospira eligens (strain ATCC 27750 / DSM 3376 / VPI C15-48 / C15-B4) (Eubacterium eligens) protein is Putative septation protein SpoVG.